The following is a 404-amino-acid chain: tRNA pseudouridine synthase D (404 aa).

Asp-79 functions as the Nucleophile in the catalytic mechanism. Residues 154–364 form the TRUD domain; that stretch reads GVPNRFGEQR…MEGERRPLRV (211 aa).

Belongs to the pseudouridine synthase TruD family.

It catalyses the reaction uridine(13) in tRNA = pseudouridine(13) in tRNA. Its function is as follows. Responsible for synthesis of pseudouridine from uracil-13 in transfer RNAs. In Geobacter metallireducens (strain ATCC 53774 / DSM 7210 / GS-15), this protein is tRNA pseudouridine synthase D.